A 132-amino-acid chain; its full sequence is Small ribosomal subunit protein uS8 (132 aa).

The protein belongs to the universal ribosomal protein uS8 family. In terms of assembly, part of the 30S ribosomal subunit. Contacts proteins S5 and S12.

Functionally, one of the primary rRNA binding proteins, it binds directly to 16S rRNA central domain where it helps coordinate assembly of the platform of the 30S subunit. This chain is Small ribosomal subunit protein uS8, found in Enterococcus faecalis (strain ATCC 700802 / V583).